The chain runs to 218 residues: Elongation factor Ts (218 aa).

Residues T82–V85 form an involved in Mg(2+) ion dislocation from EF-Tu region.

It belongs to the EF-Ts family.

The protein resides in the cytoplasm. Associates with the EF-Tu.GDP complex and induces the exchange of GDP to GTP. It remains bound to the aminoacyl-tRNA.EF-Tu.GTP complex up to the GTP hydrolysis stage on the ribosome. The sequence is that of Elongation factor Ts from Prochlorococcus marinus (strain NATL1A).